The primary structure comprises 80 residues: uncharacterized protein (80 aa).

The protein to B.cereus similar ORF in glnR 5'region.

This is an uncharacterized protein from Bacillus cereus.